Here is a 129-residue protein sequence, read N- to C-terminus: Small ribosomal subunit protein uS11 (129 aa).

This sequence belongs to the universal ribosomal protein uS11 family. As to quaternary structure, part of the 30S ribosomal subunit. Interacts with proteins S7 and S18. Binds to IF-3.

In terms of biological role, located on the platform of the 30S subunit, it bridges several disparate RNA helices of the 16S rRNA. Forms part of the Shine-Dalgarno cleft in the 70S ribosome. The polypeptide is Small ribosomal subunit protein uS11 (Lacticaseibacillus casei (strain BL23) (Lactobacillus casei)).